The sequence spans 166 residues: NADH-quinone oxidoreductase subunit A (166 aa).

A run of 3 helical transmembrane segments spans residues 16–36 (FAVF…GAYF), 68–88 (FYLV…LYAW), and 98–118 (IGFI…FYLV). The interval 141–166 (RYASSHPQDISQELSVAGSQQANESR) is disordered.

The protein belongs to the complex I subunit 3 family. In terms of assembly, NDH-1 is composed of 13 different subunits. Subunits NuoA, H, J, K, L, M, N constitute the membrane sector of the complex.

The protein resides in the cell inner membrane. It catalyses the reaction a quinone + NADH + 5 H(+)(in) = a quinol + NAD(+) + 4 H(+)(out). In terms of biological role, NDH-1 shuttles electrons from NADH, via FMN and iron-sulfur (Fe-S) centers, to quinones in the respiratory chain. The immediate electron acceptor for the enzyme in this species is believed to be ubiquinone. Couples the redox reaction to proton translocation (for every two electrons transferred, four hydrogen ions are translocated across the cytoplasmic membrane), and thus conserves the redox energy in a proton gradient. This Yersinia pseudotuberculosis serotype IB (strain PB1/+) protein is NADH-quinone oxidoreductase subunit A.